Reading from the N-terminus, the 242-residue chain is Small ribosomal subunit protein uS3 (242 aa).

Residues 39 to 110 (IRKFIHKKYG…QVRINVVEVE (72 aa)) enclose the KH type-2 domain. The tract at residues 216–242 (QPMPVGAAPRRRASRRPQQFEDRSNEG) is disordered. Basic and acidic residues predominate over residues 233–242 (QQFEDRSNEG).

It belongs to the universal ribosomal protein uS3 family. Part of the 30S ribosomal subunit. Forms a tight complex with proteins S10 and S14.

Its function is as follows. Binds the lower part of the 30S subunit head. Binds mRNA in the 70S ribosome, positioning it for translation. The polypeptide is Small ribosomal subunit protein uS3 (Synechococcus sp. (strain CC9605)).